The following is a 381-amino-acid chain: MFNVVIVRYGEIGTKSRQTRRWFENILMNNIREALVSEGIDFKKVEAKHGRVLVRTNRAREATEVLTRVFGIVSLSPAMEVDAELEKINKTALKLFRKKKRELNLEKPKFRVTARRITKEFPLKSPEIQAKVGEYILENEESEVNLHEYDIEVGVELMEGKAYIFVDKIRAWGGLPIGTQGKVVALLSGGIDSPVAAFLMMKRGVEVIPVHIYMGEKTLEKVRKIWNQLKKYHYGGKAELIVVKPQNREEMLKKIKELGKEKYTCVLCKFMMVKHADRIAKEFGAKGIVMGDSLGQVASQTLENMYIVSQASDLPIYRPLIGLDKEEIVDIAKKIGTFELSTLPEDEIPFIPKHPVIRGSWEEFRKIYMAIFGEEPRKRDC.

The THUMP domain occupies 60–168; it reads REATEVLTRV…EGKAYIFVDK (109 aa). ATP-binding positions include 186-187, lysine 269, glycine 291, and glutamine 300; that span reads LL.

The protein belongs to the ThiI family.

The protein localises to the cytoplasm. The enzyme catalyses [ThiI sulfur-carrier protein]-S-sulfanyl-L-cysteine + a uridine in tRNA + 2 reduced [2Fe-2S]-[ferredoxin] + ATP + H(+) = [ThiI sulfur-carrier protein]-L-cysteine + a 4-thiouridine in tRNA + 2 oxidized [2Fe-2S]-[ferredoxin] + AMP + diphosphate. It carries out the reaction [ThiS sulfur-carrier protein]-C-terminal Gly-Gly-AMP + S-sulfanyl-L-cysteinyl-[cysteine desulfurase] + AH2 = [ThiS sulfur-carrier protein]-C-terminal-Gly-aminoethanethioate + L-cysteinyl-[cysteine desulfurase] + A + AMP + 2 H(+). It functions in the pathway cofactor biosynthesis; thiamine diphosphate biosynthesis. Functionally, catalyzes the ATP-dependent transfer of a sulfur to tRNA to produce 4-thiouridine in position 8 of tRNAs, which functions as a near-UV photosensor. Also catalyzes the transfer of sulfur to the sulfur carrier protein ThiS, forming ThiS-thiocarboxylate. This is a step in the synthesis of thiazole, in the thiamine biosynthesis pathway. The sulfur is donated as persulfide by IscS. The polypeptide is Probable tRNA sulfurtransferase (Thermococcus kodakarensis (strain ATCC BAA-918 / JCM 12380 / KOD1) (Pyrococcus kodakaraensis (strain KOD1))).